Here is a 95-residue protein sequence, read N- to C-terminus: uncharacterized protein (95 aa).

The segment at 65–95 (DANDYDTTTTEEEDSSTTTTTDNETNSDDDI) is disordered.

This is an uncharacterized protein from Lymantria dispar multicapsid nuclear polyhedrosis virus (LdMNPV).